A 62-amino-acid chain; its full sequence is Large ribosomal subunit protein bL28 (62 aa).

This sequence belongs to the bacterial ribosomal protein bL28 family.

This Halalkalibacterium halodurans (strain ATCC BAA-125 / DSM 18197 / FERM 7344 / JCM 9153 / C-125) (Bacillus halodurans) protein is Large ribosomal subunit protein bL28.